A 566-amino-acid polypeptide reads, in one-letter code: Putative UDP-glucuronate:xylan alpha-glucuronosyltransferase 5 (566 aa).

Residues 17-37 (LILISLSFLGLLLNFKPLFLL) traverse the membrane as a helical; Signal-anchor for type II membrane protein segment. Residues D372 and D374 each contribute to the Mn(2+) site. Residues 372 to 374 (DAD), 401 to 403 (NSG), 428 to 432 (NGGDQ), and 475 to 480 (HYLGLK) contribute to the substrate site. H475 contacts Mn(2+).

The protein belongs to the glycosyltransferase 8 family. Glycogenin subfamily. The cofactor is Mn(2+).

The protein resides in the golgi apparatus membrane. Its function is as follows. May be involved in the substitutions of the xylan backbone in stem glucuronoxylan. This Arabidopsis thaliana (Mouse-ear cress) protein is Putative UDP-glucuronate:xylan alpha-glucuronosyltransferase 5 (GUX5).